We begin with the raw amino-acid sequence, 823 residues long: Putative ankyrin repeat domain-containing protein 20A2 (823 aa).

ANK repeat units follow at residues 66-95 (QHRT…QIDV), 99-128 (ENRT…NPNL), 132-161 (YGNT…HIEA), 165-194 (DNNT…SSHA), and 198-227 (LRRS…DVFA). Disordered stretches follow at residues 301 to 343 (VPEK…EVED) and 355 to 402 (VQTL…LSEN). Positions 372 to 384 (QERHERSEKKQPQ) are enriched in basic and acidic residues. 3 coiled-coil regions span residues 431–480 (KKLK…KQLE), 565–724 (EMIT…NNST), and 776–805 (LVLE…EKTE).

In Homo sapiens (Human), this protein is Putative ankyrin repeat domain-containing protein 20A2.